We begin with the raw amino-acid sequence, 369 residues long: UDP-N-acetylglucosamine--N-acetylmuramyl-(pentapeptide) pyrophosphoryl-undecaprenol N-acetylglucosamine transferase (369 aa).

UDP-N-acetyl-alpha-D-glucosamine-binding positions include 15–17 (TGG), asparagine 126, arginine 169, serine 197, and glutamine 299.

It belongs to the glycosyltransferase 28 family. MurG subfamily.

Its subcellular location is the cell inner membrane. The catalysed reaction is di-trans,octa-cis-undecaprenyl diphospho-N-acetyl-alpha-D-muramoyl-L-alanyl-D-glutamyl-meso-2,6-diaminopimeloyl-D-alanyl-D-alanine + UDP-N-acetyl-alpha-D-glucosamine = di-trans,octa-cis-undecaprenyl diphospho-[N-acetyl-alpha-D-glucosaminyl-(1-&gt;4)]-N-acetyl-alpha-D-muramoyl-L-alanyl-D-glutamyl-meso-2,6-diaminopimeloyl-D-alanyl-D-alanine + UDP + H(+). It functions in the pathway cell wall biogenesis; peptidoglycan biosynthesis. Cell wall formation. Catalyzes the transfer of a GlcNAc subunit on undecaprenyl-pyrophosphoryl-MurNAc-pentapeptide (lipid intermediate I) to form undecaprenyl-pyrophosphoryl-MurNAc-(pentapeptide)GlcNAc (lipid intermediate II). The protein is UDP-N-acetylglucosamine--N-acetylmuramyl-(pentapeptide) pyrophosphoryl-undecaprenol N-acetylglucosamine transferase of Methylorubrum extorquens (strain CM4 / NCIMB 13688) (Methylobacterium extorquens).